A 239-amino-acid chain; its full sequence is Cytochrome c oxidase subunit 2 (239 aa).

At 1–26 (MATPAQLGLMDAASPVMEEMIYFHDH) the chain is on the mitochondrial intermembrane side. A helical membrane pass occupies residues 27 to 48 (VMLVLILITCLIFYSMLVLISS). Topologically, residues 49 to 62 (KYIYRFLTDGHVIE) are mitochondrial matrix. The chain crosses the membrane as a helical span at residues 63 to 82 (TVWTVIPAIILVVVALPSLK). Over 83-239 (LLYLTDELDN…ESLGSLNMKR (157 aa)) the chain is Mitochondrial intermembrane. Positions 161, 196, 198, 200, 204, and 207 each coordinate Cu cation. Glu198 contacts Mg(2+).

The protein belongs to the cytochrome c oxidase subunit 2 family. In terms of assembly, component of the cytochrome c oxidase (complex IV, CIV), a multisubunit enzyme composed of a catalytic core of 3 subunits and several supernumerary subunits. The complex exists as a monomer or a dimer and forms supercomplexes (SCs) in the inner mitochondrial membrane with ubiquinol-cytochrome c oxidoreductase (cytochrome b-c1 complex, complex III, CIII). Requires Cu cation as cofactor.

It is found in the mitochondrion inner membrane. It catalyses the reaction 4 Fe(II)-[cytochrome c] + O2 + 8 H(+)(in) = 4 Fe(III)-[cytochrome c] + 2 H2O + 4 H(+)(out). In terms of biological role, component of the cytochrome c oxidase, the last enzyme in the mitochondrial electron transport chain which drives oxidative phosphorylation. The respiratory chain contains 3 multisubunit complexes succinate dehydrogenase (complex II, CII), ubiquinol-cytochrome c oxidoreductase (cytochrome b-c1 complex, complex III, CIII) and cytochrome c oxidase (complex IV, CIV), that cooperate to transfer electrons derived from NADH and succinate to molecular oxygen, creating an electrochemical gradient over the inner membrane that drives transmembrane transport and the ATP synthase. Cytochrome c oxidase is the component of the respiratory chain that catalyzes the reduction of oxygen to water. Electrons originating from reduced cytochrome c in the intermembrane space (IMS) are transferred via the dinuclear copper A center (CU(A)) of subunit 2 and heme A of subunit 1 to the active site in subunit 1, a binuclear center (BNC) formed by heme A3 and copper B (CU(B)). The BNC reduces molecular oxygen to 2 water molecules using 4 electrons from cytochrome c in the IMS and 4 protons from the mitochondrial matrix. In Branchiostoma lanceolatum (Common lancelet), this protein is Cytochrome c oxidase subunit 2 (COII).